A 148-amino-acid chain; its full sequence is Large ribosomal subunit protein bL9 (148 aa).

Belongs to the bacterial ribosomal protein bL9 family.

Binds to the 23S rRNA. The protein is Large ribosomal subunit protein bL9 of Listeria innocua serovar 6a (strain ATCC BAA-680 / CLIP 11262).